The chain runs to 287 residues: 4-hydroxybenzoate octaprenyltransferase (287 aa).

The next 9 helical transmembrane spans lie at 21 to 41 (VGIFLLLWPTLWAVWIAAKGA), 44 to 64 (FKIAVIFIAGSVVMRAAGCIV), 91 to 111 (VTEAMLLFAVLSLIAFTLVLL), 112 to 132 (LNRLTVELAVIGILLALVYPF), 139 to 159 (LPQLWLGVAFSWSIPMAFAAT), 160 to 180 (VGHVPAVAWLLFFAAVLWPIV), 211 to 231 (LMIGLLQGSVLLTFGLLGWYL), 235 to 255 (YWFYLGLLVALGLMCYQQFLI), and 263 to 283 (CFAAFRNNNWVGFFIFLGILL).

The protein belongs to the UbiA prenyltransferase family. It depends on Mg(2+) as a cofactor.

It is found in the cell inner membrane. It catalyses the reaction all-trans-octaprenyl diphosphate + 4-hydroxybenzoate = 4-hydroxy-3-(all-trans-octaprenyl)benzoate + diphosphate. It functions in the pathway cofactor biosynthesis; ubiquinone biosynthesis. Its function is as follows. Catalyzes the prenylation of para-hydroxybenzoate (PHB) with an all-trans polyprenyl group. Mediates the second step in the final reaction sequence of ubiquinone-8 (UQ-8) biosynthesis, which is the condensation of the polyisoprenoid side chain with PHB, generating the first membrane-bound Q intermediate 3-octaprenyl-4-hydroxybenzoate. The chain is 4-hydroxybenzoate octaprenyltransferase from Coxiella burnetii (strain RSA 331 / Henzerling II).